A 425-amino-acid polypeptide reads, in one-letter code: Kynurenine/alpha-aminoadipate aminotransferase, mitochondrial (425 aa).

Residues 1-29 (MNYSRFLTATSLARKPSPIRTTADILSKA) constitute a mitochondrion transit peptide. Arg20 serves as a coordination point for substrate. Ser40 carries the post-translational modification Phosphoserine. At Lys69 the chain carries N6-acetyllysine. Residue Tyr74 participates in substrate binding. At Lys172 the chain carries N6-succinyllysine. N6-acetyllysine is present on Lys179. Asn202 contributes to the substrate binding site. Position 263 is an N6-(pyridoxal phosphate)lysine; alternate (Lys263). N6-acetyllysine; alternate occurs at positions 263 and 339. N6-succinyllysine; alternate is present on residues Lys263 and Lys339. At Lys351 the chain carries N6-acetyllysine. At Lys367 the chain carries N6-acetyllysine; alternate. An N6-succinyllysine; alternate modification is found at Lys367. Residue Arg399 coordinates substrate. Lys422 is modified (N6-acetyllysine).

It belongs to the class-I pyridoxal-phosphate-dependent aminotransferase family. Homodimer. It depends on pyridoxal 5'-phosphate as a cofactor. In terms of tissue distribution, expressed mainly in kidney and to a lesser amount in liver and brain.

It is found in the mitochondrion. It catalyses the reaction L-kynurenine + 2-oxoglutarate = kynurenate + L-glutamate + H2O. The catalysed reaction is L-2-aminoadipate + 2-oxoglutarate = 2-oxoadipate + L-glutamate. The enzyme catalyses glycine + 2-oxoglutarate = glyoxylate + L-glutamate. It carries out the reaction L-kynurenine + glyoxylate = kynurenate + glycine + H2O. It catalyses the reaction 3-hydroxy-L-kynurenine + glyoxylate = xanthurenate + glycine + H2O. The catalysed reaction is 2-oxohexanoate + L-kynurenine = L-2-aminohexanoate + kynurenate + H2O. The enzyme catalyses 3-phenylpyruvate + L-kynurenine = kynurenate + L-phenylalanine + H2O. It carries out the reaction 4-methylsulfanyl-2-oxobutanoate + L-kynurenine = kynurenate + L-methionine + H2O. It catalyses the reaction 2-oxo-3-sulfanylpropanoate + L-kynurenine = kynurenate + L-cysteine + H2O. The catalysed reaction is indole-3-pyruvate + L-kynurenine = kynurenate + L-tryptophan + H2O. The enzyme catalyses 2-oxopentanoate + L-kynurenine = L-2-aminopentanoate + kynurenate + H2O. It carries out the reaction 4-methyl-2-oxopentanoate + L-kynurenine = kynurenate + L-leucine + H2O. It catalyses the reaction glyoxylate + L-methionine = 4-methylsulfanyl-2-oxobutanoate + glycine. The catalysed reaction is L-2-aminoadipate + glyoxylate = 2-oxoadipate + glycine. The enzyme catalyses L-tyrosine + glyoxylate = 3-(4-hydroxyphenyl)pyruvate + glycine. It carries out the reaction glyoxylate + L-phenylalanine = 3-phenylpyruvate + glycine. It catalyses the reaction L-tryptophan + glyoxylate = indole-3-pyruvate + glycine. The catalysed reaction is L-leucine + glyoxylate = 4-methyl-2-oxopentanoate + glycine. The enzyme catalyses 2-oxobutanoate + L-kynurenine = (2S)-2-aminobutanoate + kynurenate + H2O. It carries out the reaction 2-oxoadipate + L-kynurenine = L-2-aminoadipate + kynurenate + H2O. The protein operates within amino-acid degradation; L-lysine degradation via saccharopine pathway; glutaryl-CoA from L-lysine: step 4/6. Transaminase with broad substrate specificity. Has transaminase activity towards aminoadipate, kynurenine, methionine and glutamate. Shows activity also towards tryptophan, aspartate and hydroxykynurenine. Accepts a variety of oxo-acids as amino-group acceptors, with a preference for 2-oxoglutarate, 2-oxocaproic acid, phenylpyruvate and alpha-oxo-gamma-methiol butyric acid. Can also use glyoxylate as amino-group acceptor (in vitro). The protein is Kynurenine/alpha-aminoadipate aminotransferase, mitochondrial of Mus musculus (Mouse).